Consider the following 49-residue polypeptide: Large ribosomal subunit protein bL33C (49 aa).

Belongs to the bacterial ribosomal protein bL33 family.

The sequence is that of Large ribosomal subunit protein bL33C from Bacillus pumilus (strain SAFR-032).